A 192-amino-acid polypeptide reads, in one-letter code: T-cell surface glycoprotein CD3 epsilon chain (192 aa).

An N-terminal signal peptide occupies residues methionine 1–alanine 21. Residues glutamine 22–asparagine 111 are Extracellular-facing. The 72-residue stretch at glutamine 27–tyrosine 98 folds into the Ig-like domain. Cysteine 43 and cysteine 84 are joined by a disulfide. The helical transmembrane segment at leucine 112–serine 137 threads the bilayer. Residues lysine 138–valine 192 are Cytoplasmic-facing. The segment at proline 146–valine 192 is disordered. The tract at residues glutamine 160–arginine 177 is NUMB-binding region. One can recognise an ITAM domain in the interval glutamate 163–arginine 190. The interval arginine 164–proline 171 is proline-rich sequence. A phosphotyrosine mark is found at tyrosine 173 and tyrosine 184.

In terms of assembly, the TCR-CD3 complex is composed of a CD3D/CD3E and a CD3G/CD3E heterodimers that preferentially associate with TCRalpha and TCRbeta, respectively, to form TCRalpha/CD3E/CD3G and TCRbeta/CD3G/CD3E trimers. In turn, the hexamer interacts with CD3Z homodimer to form the TCR-CD3 complex. Alternatively, TCRalpha and TCRbeta can be replaced by TCRgamma and TCRdelta. Interacts with CD6. Interacts (via Proline-rich sequence) with NCK1; the interaction is ligand dependent but independent of tyrosine kinase activation. In terms of processing, phosphorylated on Tyr residues after T-cell receptor triggering by LCK in association with CD4/CD8.

It localises to the cell membrane. Its function is as follows. Part of the TCR-CD3 complex present on T-lymphocyte cell surface that plays an essential role in adaptive immune response. When antigen presenting cells (APCs) activate T-cell receptor (TCR), TCR-mediated signals are transmitted across the cell membrane by the CD3 chains CD3D, CD3E, CD3G and CD3Z. All CD3 chains contain immunoreceptor tyrosine-based activation motifs (ITAMs) in their cytoplasmic domain. Upon TCR engagement, these motifs become phosphorylated by Src family protein tyrosine kinases LCK and FYN, resulting in the activation of downstream signaling pathways. In addition of this role of signal transduction in T-cell activation, CD3E plays an essential role in correct T-cell development. Also participates in internalization and cell surface down-regulation of TCR-CD3 complexes via endocytosis sequences present in CD3E cytosolic region. In addition to its role as a TCR coreceptor, it serves as a receptor for ITPRIPL1. Ligand recognition inhibits T-cell activation by promoting interaction with NCK1, which prevents CD3E-ZAP70 interaction and blocks the ERK-NFkB signaling cascade and calcium influx. The sequence is that of T-cell surface glycoprotein CD3 epsilon chain (CD3E) from Ovis aries (Sheep).